A 298-amino-acid polypeptide reads, in one-letter code: MAWLQATIDSDSAVAERLADALMDAGALSTAIEDAWAGTDKEQPIFGEPGEPVDQLWSQSRIITLFDESADVALLIAAAANACQLAMPAYSVERVEEQDWVRLTQSQFEPIRISDRLWITPTWHEAPAPNAVNLQLDPGLAFGTGSHPTTRLCLQWLDKQLQGNESVLDYGCGSGILAIAALKLGAASAVGIDIDQQAVRASQDNAEQNGVKADFFLPNANPAAQYDVVLANILANPLRMLGDLLASHVKTGGRIVLSGILAEQADELSAIYSQWFEMDPPVFDEGWTRLTGTRRAAV.

4 residues coordinate S-adenosyl-L-methionine: Thr-150, Gly-171, Asp-193, and Asn-232.

It belongs to the methyltransferase superfamily. PrmA family.

The protein localises to the cytoplasm. The enzyme catalyses L-lysyl-[protein] + 3 S-adenosyl-L-methionine = N(6),N(6),N(6)-trimethyl-L-lysyl-[protein] + 3 S-adenosyl-L-homocysteine + 3 H(+). In terms of biological role, methylates ribosomal protein L11. This Chromobacterium violaceum (strain ATCC 12472 / DSM 30191 / JCM 1249 / CCUG 213 / NBRC 12614 / NCIMB 9131 / NCTC 9757 / MK) protein is Ribosomal protein L11 methyltransferase.